We begin with the raw amino-acid sequence, 460 residues long: UDP-glucuronate 4-epimerase 6 (460 aa).

2 helical membrane-spanning segments follow: residues 41–61 and 111–131; these read ATLL…PPLS and GLSV…SLAL. 113–144 contributes to the NAD(+) binding site; sequence SVLVTGAAGFVGSHCSLALRKRGDGVLGFDNF. Tyrosine 263 acts as the Proton acceptor in catalysis.

It belongs to the NAD(P)-dependent epimerase/dehydratase family. As to quaternary structure, homodimer. As to expression, in roots, leaf veins, siliques, flowers, pollen and stems.

It localises to the golgi apparatus. Its subcellular location is the golgi stack membrane. It carries out the reaction UDP-alpha-D-glucuronate = UDP-alpha-D-galacturonate. In terms of biological role, involved in the synthesis of the negatively charged monosaccharide that forms the backbone of pectic cell wall components. This is UDP-glucuronate 4-epimerase 6 (GAE6) from Arabidopsis thaliana (Mouse-ear cress).